The sequence spans 131 residues: Mediator of RNA polymerase II transcription subunit 31 (131 aa).

The residue at position 2 (Ala2) is an N-acetylalanine.

The protein belongs to the Mediator complex subunit 31 family. In terms of assembly, component of the Mediator complex, which is composed of MED1, MED4, MED6, MED7, MED8, MED9, MED10, MED11, MED12, MED13, MED13L, MED14, MED15, MED16, MED17, MED18, MED19, MED20, MED21, MED22, MED23, MED24, MED25, MED26, MED27, MED29, MED30, MED31, CCNC, CDK8 and CDC2L6/CDK11. The MED12, MED13, CCNC and CDK8 subunits form a distinct module termed the CDK8 module. Mediator containing the CDK8 module is less active than Mediator lacking this module in supporting transcriptional activation. Individual preparations of the Mediator complex lacking one or more distinct subunits have been variously termed ARC, CRSP, DRIP, PC2, SMCC and TRAP.

The protein resides in the nucleus. Its function is as follows. Component of the Mediator complex, a coactivator involved in the regulated transcription of nearly all RNA polymerase II-dependent genes. Mediator functions as a bridge to convey information from gene-specific regulatory proteins to the basal RNA polymerase II transcription machinery. Mediator is recruited to promoters by direct interactions with regulatory proteins and serves as a scaffold for the assembly of a functional preinitiation complex with RNA polymerase II and the general transcription factors. The chain is Mediator of RNA polymerase II transcription subunit 31 (MED31) from Homo sapiens (Human).